Consider the following 520-residue polypeptide: Probable cytochrome P450 6v1 (520 aa).

Cysteine 465 contacts heme.

It belongs to the cytochrome P450 family. The cofactor is heme.

It is found in the endoplasmic reticulum membrane. Its subcellular location is the microsome membrane. May be involved in the metabolism of insect hormones and in the breakdown of synthetic insecticides. This chain is Probable cytochrome P450 6v1 (Cyp6v1), found in Drosophila melanogaster (Fruit fly).